We begin with the raw amino-acid sequence, 234 residues long: Glucosamine-6-phosphate deaminase (234 aa).

The active-site Proton acceptor; for enolization step is Asp62. Asn128 acts as the For ring-opening step in catalysis. His130 (proton acceptor; for ring-opening step) is an active-site residue. Catalysis depends on Glu135, which acts as the For ring-opening step.

Belongs to the glucosamine/galactosamine-6-phosphate isomerase family. NagB subfamily.

The enzyme catalyses alpha-D-glucosamine 6-phosphate + H2O = beta-D-fructose 6-phosphate + NH4(+). The protein operates within amino-sugar metabolism; N-acetylneuraminate degradation; D-fructose 6-phosphate from N-acetylneuraminate: step 5/5. Catalyzes the reversible isomerization-deamination of glucosamine 6-phosphate (GlcN6P) to form fructose 6-phosphate (Fru6P) and ammonium ion. This is Glucosamine-6-phosphate deaminase from Streptococcus equi subsp. zooepidemicus (strain H70).